The following is a 459-amino-acid chain: Cysteine--tRNA ligase (459 aa).

C31 serves as a coordination point for Zn(2+). The 'HIGH' region motif lies at 33 to 43; the sequence is PTVYDNPHIGN. Positions 216, 241, and 245 each coordinate Zn(2+). A 'KMSKS' region motif is present at residues 274–278; it reads KMSKS. Residue K277 participates in ATP binding.

It belongs to the class-I aminoacyl-tRNA synthetase family. In terms of assembly, monomer. The cofactor is Zn(2+).

Its subcellular location is the cytoplasm. It carries out the reaction tRNA(Cys) + L-cysteine + ATP = L-cysteinyl-tRNA(Cys) + AMP + diphosphate. The chain is Cysteine--tRNA ligase from Rickettsia felis (strain ATCC VR-1525 / URRWXCal2) (Rickettsia azadi).